We begin with the raw amino-acid sequence, 459 residues long: Glutamyl-tRNA reductase (459 aa).

Substrate-binding positions include Thr49–Arg52, Ser109, Glu114–Gln116, and Gln120. The Nucleophile role is filled by Cys50. Position 189-194 (Gly189–Gly194) interacts with NADP(+).

This sequence belongs to the glutamyl-tRNA reductase family. As to quaternary structure, homodimer.

The enzyme catalyses (S)-4-amino-5-oxopentanoate + tRNA(Glu) + NADP(+) = L-glutamyl-tRNA(Glu) + NADPH + H(+). It functions in the pathway porphyrin-containing compound metabolism; protoporphyrin-IX biosynthesis; 5-aminolevulinate from L-glutamyl-tRNA(Glu): step 1/2. In terms of biological role, catalyzes the NADPH-dependent reduction of glutamyl-tRNA(Glu) to glutamate 1-semialdehyde (GSA). In Halalkalibacterium halodurans (strain ATCC BAA-125 / DSM 18197 / FERM 7344 / JCM 9153 / C-125) (Bacillus halodurans), this protein is Glutamyl-tRNA reductase.